The following is a 482-amino-acid chain: ATP synthase subunit beta (482 aa).

168–175 (GGAGVGKT) is an ATP binding site.

The protein belongs to the ATPase alpha/beta chains family. In terms of assembly, F-type ATPases have 2 components, CF(1) - the catalytic core - and CF(0) - the membrane proton channel. CF(1) has five subunits: alpha(3), beta(3), gamma(1), delta(1), epsilon(1). CF(0) has three main subunits: a(1), b(2) and c(9-12). The alpha and beta chains form an alternating ring which encloses part of the gamma chain. CF(1) is attached to CF(0) by a central stalk formed by the gamma and epsilon chains, while a peripheral stalk is formed by the delta and b chains.

Its subcellular location is the cell membrane. The catalysed reaction is ATP + H2O + 4 H(+)(in) = ADP + phosphate + 5 H(+)(out). In terms of biological role, produces ATP from ADP in the presence of a proton gradient across the membrane. The catalytic sites are hosted primarily by the beta subunits. The chain is ATP synthase subunit beta from Nocardia farcinica (strain IFM 10152).